Consider the following 273-residue polypeptide: Urease accessory protein UreD (273 aa).

Residues 1 to 29 are disordered; sequence MLMRTATPLDQPRAIGSARVSSKRVNGGS.

It belongs to the UreD family. UreD, UreF and UreG form a complex that acts as a GTP-hydrolysis-dependent molecular chaperone, activating the urease apoprotein by helping to assemble the nickel containing metallocenter of UreC. The UreE protein probably delivers the nickel.

Its subcellular location is the cytoplasm. Required for maturation of urease via the functional incorporation of the urease nickel metallocenter. The polypeptide is Urease accessory protein UreD (Roseobacter denitrificans (strain ATCC 33942 / OCh 114) (Erythrobacter sp. (strain OCh 114))).